The sequence spans 126 residues: Fluoride-specific ion channel FluC (126 aa).

The next 4 helical transmembrane spans lie at 4 to 24 (PLLS…LLGL), 33 to 53 (IPLG…FAMA), 67 to 87 (FVIT…IEIV), and 97 to 117 (MAML…CLGL). Residues G74 and T77 each contribute to the Na(+) site.

Belongs to the fluoride channel Fluc/FEX (TC 1.A.43) family.

It is found in the cell inner membrane. The catalysed reaction is fluoride(in) = fluoride(out). Its activity is regulated as follows. Na(+) is not transported, but it plays an essential structural role and its presence is essential for fluoride channel function. In terms of biological role, fluoride-specific ion channel. Important for reducing fluoride concentration in the cell, thus reducing its toxicity. This is Fluoride-specific ion channel FluC from Acinetobacter baumannii (strain ACICU).